The following is a 245-amino-acid chain: DnaJ homolog subfamily B member 6-B (245 aa).

Residues 3–69 (EYYDVLGVQR…KKRDIYDKYG (67 aa)) enclose the J domain.

Homooligomer.

Its subcellular location is the cytoplasm. The protein localises to the perinuclear region. It localises to the nucleus. Its function is as follows. Has a stimulatory effect on the ATPase activity of HSP70 in a dose-dependent and time-dependent manner and hence acts as a co-chaperone of HSP70. Plays an indispensable role in the organization of KRT8/KRT18 filaments. Acts as an endogenous molecular chaperone for neuronal proteins including huntingtin. Suppresses aggregation and toxicity of polyglutamine-containing, aggregation-prone proteins. Also reduces cellular toxicity and caspase-3 activity. This chain is DnaJ homolog subfamily B member 6-B (dnajb6-b), found in Xenopus laevis (African clawed frog).